The sequence spans 501 residues: Myosin heavy chain, embryonic smooth muscle isoform (501 aa).

Residues 1–457 adopt a coiled-coil conformation; that stretch reads REAREKETKA…TLKNRLRRGG (457 aa). The interval 1-501 is rodlike tail (S2 and LMM domains); that stretch reads REAREKETKA…VNETQPPQSE (501 aa). 3 disordered regions span residues 182-202, 221-254, and 397-501; these read YQRE…QSKE, LASS…ALLD, and MEKA…PQSE. Basic and acidic residues predominate over residues 223 to 233; the sequence is SSERARRHAEQ. Over residues 492-501 the composition is skewed to polar residues; it reads VNETQPPQSE.

Muscle myosin is a hexameric protein that consists of 2 heavy chain subunits (MHC), 2 alkali light chain subunits (MLC) and 2 regulatory light chain subunits (MLC-2).

The protein resides in the cytoplasm. Its subcellular location is the myofibril. Muscle contraction. The protein is Myosin heavy chain, embryonic smooth muscle isoform of Oryctolagus cuniculus (Rabbit).